Here is a 445-residue protein sequence, read N- to C-terminus: 2-oxoisovalerate dehydrogenase subunit alpha, mitochondrial (445 aa).

Residues 1 to 45 constitute a mitochondrion transit peptide; the sequence is MAVAIAAARVWRLNRGLSQAALLLLRRPGARGLARSHPRRQQQQF. The disordered stretch occupies residues 33-54; it reads LARSHPRRQQQQFSSLDDKPQF. Tyr158 and Arg159 together coordinate thiamine diphosphate. Ser206 lines the K(+) pocket. Ser207 provides a ligand contact to thiamine diphosphate. The K(+) site is built by Pro208, Thr211, and Gln212. Glu238 contributes to the Mg(2+) binding site. Residues Gly239, Ala240, and Arg265 each contribute to the thiamine diphosphate site. Mg(2+) contacts are provided by Asn267 and Tyr269. His336 serves as a coordination point for thiamine diphosphate. Ser337 is modified (phosphoserine; by BCKDK). Position 338 is a phosphothreonine (Thr338). Ser339 and Ser347 each carry phosphoserine. Lys356 is subject to N6-acetyllysine; alternate. An N6-succinyllysine; alternate modification is found at Lys356. Residue Lys380 is modified to N6-succinyllysine.

This sequence belongs to the BCKDHA family. Heterotetramer of 2 alpha/BCKDHA and 2 beta chains/BCKDHB that forms the branched-chain alpha-keto acid decarboxylase (E1) component of the BCKD complex. The branched-chain alpha-ketoacid dehydrogenase is a large complex composed of three major building blocks E1, E2 and E3. It is organized around E2, a 24-meric cubic core composed of DBT, to which are associated 6 to 12 copies of E1, and approximately 6 copies of the dehydrogenase E3, a DLD dimer. Interacts with PPM1K. Thiamine diphosphate serves as cofactor. The cofactor is Mg(2+). Post-translationally, phosphorylated at Ser-337 by BCKDK and dephosphorylated by protein phosphatase PPM1K.

The protein resides in the mitochondrion matrix. It carries out the reaction N(6)-[(R)-lipoyl]-L-lysyl-[protein] + 3-methyl-2-oxobutanoate + H(+) = N(6)-[(R)-S(8)-2-methylpropanoyldihydrolipoyl]-L-lysyl-[protein] + CO2. Functionally, together with BCKDHB forms the heterotetrameric E1 subunit of the mitochondrial branched-chain alpha-ketoacid dehydrogenase (BCKD) complex. The BCKD complex catalyzes the multi-step oxidative decarboxylation of alpha-ketoacids derived from the branched-chain amino-acids valine, leucine and isoleucine producing CO2 and acyl-CoA which is subsequently utilized to produce energy. The E1 subunit catalyzes the first step with the decarboxylation of the alpha-ketoacid forming an enzyme-product intermediate. A reductive acylation mediated by the lipoylamide cofactor of E2 extracts the acyl group from the E1 active site for the next step of the reaction. The polypeptide is 2-oxoisovalerate dehydrogenase subunit alpha, mitochondrial (BCKDHA) (Pan troglodytes (Chimpanzee)).